The sequence spans 382 residues: ATP phosphoribosyltransferase regulatory subunit (382 aa).

The protein belongs to the class-II aminoacyl-tRNA synthetase family. HisZ subfamily. Heteromultimer composed of HisG and HisZ subunits.

Its subcellular location is the cytoplasm. It functions in the pathway amino-acid biosynthesis; L-histidine biosynthesis; L-histidine from 5-phospho-alpha-D-ribose 1-diphosphate: step 1/9. Its function is as follows. Required for the first step of histidine biosynthesis. May allow the feedback regulation of ATP phosphoribosyltransferase activity by histidine. This is ATP phosphoribosyltransferase regulatory subunit from Burkholderia multivorans (strain ATCC 17616 / 249).